Consider the following 260-residue polypeptide: uncharacterized protein (260 aa).

Belongs to the MG032/MG096/MG288 family.

This is an uncharacterized protein from Mycoplasma pneumoniae (strain ATCC 29342 / M129 / Subtype 1) (Mycoplasmoides pneumoniae).